The primary structure comprises 367 residues: Ferredoxin--NADP reductase 2 (367 aa).

7 residues coordinate FAD: Asp-56, Gln-64, Tyr-69, Val-109, Phe-144, Asp-309, and Thr-350.

It belongs to the ferredoxin--NADP reductase type 2 family. In terms of assembly, homodimer. The cofactor is FAD.

The enzyme catalyses 2 reduced [2Fe-2S]-[ferredoxin] + NADP(+) + H(+) = 2 oxidized [2Fe-2S]-[ferredoxin] + NADPH. The sequence is that of Ferredoxin--NADP reductase 2 from Cupriavidus metallidurans (strain ATCC 43123 / DSM 2839 / NBRC 102507 / CH34) (Ralstonia metallidurans).